The following is a 66-amino-acid chain: Large ribosomal subunit protein bL33c (66 aa).

It belongs to the bacterial ribosomal protein bL33 family.

It localises to the plastid. The protein localises to the chloroplast. The protein is Large ribosomal subunit protein bL33c (rpl33) of Arabidopsis thaliana (Mouse-ear cress).